A 338-amino-acid chain; its full sequence is MGSSSSKSSSSVTVASSIDYKAKPTIDELGTSNYSGGLEVSKNLLDFNLGEKPCPLKSVVQDQFTISNSSKTKLKFHFEPLQPKEFQLSFSPTSGSLDKGKSKTIKVKLMVNQKINTNHKVVLRVEGGASHFLTVKIRCETGVFGVDPNTLEHVEDEGFRVPYILALMKRSLIDNGGLQQEGIFRLAGEQTEIKRLKEAMNRNDFTSSTDINTVASLIKIWYRELPTPILNSIPTEKIFYSTDIDECVQSAKNLPEPQKSLLDWLMHLLLMVSSFSDVNKMTAQNLAIVVAPNLYDVSSSNPMEGLVLSQKCVQFLHNVLSHKVAVHKRESVAYEVLS.

The Rho-GAP domain maps to 149–327; it reads NTLEHVEDEG…NVLSHKVAVH (179 aa).

It is found in the cytoplasm. In terms of biological role, rho GTPase-activating protein involved in the signal transduction pathway. The protein is Rho GTPase-activating protein gacA (gacA) of Dictyostelium discoideum (Social amoeba).